The primary structure comprises 479 residues: Aspartyl/glutamyl-tRNA(Asn/Gln) amidotransferase subunit B (479 aa).

This sequence belongs to the GatB/GatE family. GatB subfamily. In terms of assembly, heterotrimer of A, B and C subunits.

It carries out the reaction L-glutamyl-tRNA(Gln) + L-glutamine + ATP + H2O = L-glutaminyl-tRNA(Gln) + L-glutamate + ADP + phosphate + H(+). It catalyses the reaction L-aspartyl-tRNA(Asn) + L-glutamine + ATP + H2O = L-asparaginyl-tRNA(Asn) + L-glutamate + ADP + phosphate + 2 H(+). Its function is as follows. Allows the formation of correctly charged Asn-tRNA(Asn) or Gln-tRNA(Gln) through the transamidation of misacylated Asp-tRNA(Asn) or Glu-tRNA(Gln) in organisms which lack either or both of asparaginyl-tRNA or glutaminyl-tRNA synthetases. The reaction takes place in the presence of glutamine and ATP through an activated phospho-Asp-tRNA(Asn) or phospho-Glu-tRNA(Gln). This chain is Aspartyl/glutamyl-tRNA(Asn/Gln) amidotransferase subunit B, found in Streptococcus pyogenes serotype M49 (strain NZ131).